The chain runs to 380 residues: Queuine tRNA-ribosyltransferase (380 aa).

The active-site Proton acceptor is the aspartate 96. Substrate-binding positions include 96–100 (DSGGF), aspartate 150, glutamine 193, and glycine 220. The tract at residues 251–257 (GVGAPDS) is RNA binding. Catalysis depends on aspartate 270, which acts as the Nucleophile. The tract at residues 275 to 279 (TRIAR) is RNA binding; important for wobble base 34 recognition. Zn(2+) contacts are provided by cysteine 308, cysteine 310, cysteine 313, and histidine 339.

It belongs to the queuine tRNA-ribosyltransferase family. Homodimer. Within each dimer, one monomer is responsible for RNA recognition and catalysis, while the other monomer binds to the replacement base PreQ1. It depends on Zn(2+) as a cofactor.

It catalyses the reaction 7-aminomethyl-7-carbaguanine + guanosine(34) in tRNA = 7-aminomethyl-7-carbaguanosine(34) in tRNA + guanine. Its pathway is tRNA modification; tRNA-queuosine biosynthesis. Its function is as follows. Catalyzes the base-exchange of a guanine (G) residue with the queuine precursor 7-aminomethyl-7-deazaguanine (PreQ1) at position 34 (anticodon wobble position) in tRNAs with GU(N) anticodons (tRNA-Asp, -Asn, -His and -Tyr). Catalysis occurs through a double-displacement mechanism. The nucleophile active site attacks the C1' of nucleotide 34 to detach the guanine base from the RNA, forming a covalent enzyme-RNA intermediate. The proton acceptor active site deprotonates the incoming PreQ1, allowing a nucleophilic attack on the C1' of the ribose to form the product. After dissociation, two additional enzymatic reactions on the tRNA convert PreQ1 to queuine (Q), resulting in the hypermodified nucleoside queuosine (7-(((4,5-cis-dihydroxy-2-cyclopenten-1-yl)amino)methyl)-7-deazaguanosine). This Streptococcus thermophilus (strain CNRZ 1066) protein is Queuine tRNA-ribosyltransferase.